Consider the following 299-residue polypeptide: Peroxisomal biogenesis factor 19 (299 aa).

At Ala-2 the chain carries N-acetylalanine. Positions 2–56 are docking to the peroxisome membrane and binding to PEX3; it reads AAAEGGCGAGVEADRELEELLESALDDFDKAKPSPAPSPTISAPDASGPQKRSPG. The segment at 2–91 is necessary for PEX19 function on peroxisome biogenesis; it reads AAAEGGCGAG…QATAEFEKAM (90 aa). The tract at residues 25–63 is disordered; that stretch reads ALDDFDKAKPSPAPSPTISAPDASGPQKRSPGDTAKDAL. A phosphoserine mark is found at Ser-35, Ser-39, Ser-54, and Ser-66. The residue at position 236 (Thr-236) is a Phosphothreonine. The residue at position 296 (Cys-296) is a Cysteine methyl ester. The S-farnesyl cysteine moiety is linked to residue Cys-296. Positions 297–299 are cleaved as a propeptide — removed in mature form; the sequence is LIM.

This sequence belongs to the peroxin-19 family. In terms of assembly, interacts with a broad range of peroxisomal membrane proteins, including PEX3, PEX10, PEX11A, PEX11B, PEX12, PEX13, PEX14 and PEX16, PXMP2/PMP22, PXMP4/PMP24, SLC25A17/PMP34, ABCD1/ALDP, ABCD2/ALDRP, and ABCD3/PMP70. Also interacts with the tumor suppressor CDKN2A/p19ARF.

Its subcellular location is the cytoplasm. The protein resides in the peroxisome membrane. Functionally, necessary for early peroxisomal biogenesis. Acts both as a cytosolic chaperone and as an import receptor for peroxisomal membrane proteins (PMPs). Binds and stabilizes newly synthesized PMPs in the cytoplasm by interacting with their hydrophobic membrane-spanning domains, and targets them to the peroxisome membrane by binding to the integral membrane protein PEX3. Excludes CDKN2A from the nucleus and prevents its interaction with MDM2, which results in active degradation of TP53. The protein is Peroxisomal biogenesis factor 19 (Pex19) of Rattus norvegicus (Rat).